Here is a 211-residue protein sequence, read N- to C-terminus: LexA repressor (211 aa).

The H-T-H motif DNA-binding region spans 27–47 (QTEIARAFGFKGVRAVQHHLD). Active-site for autocatalytic cleavage activity residues include Ser-131 and Lys-168.

This sequence belongs to the peptidase S24 family. Homodimer.

The enzyme catalyses Hydrolysis of Ala-|-Gly bond in repressor LexA.. Its function is as follows. Represses a number of genes involved in the response to DNA damage (SOS response), including recA and lexA. In the presence of single-stranded DNA, RecA interacts with LexA causing an autocatalytic cleavage which disrupts the DNA-binding part of LexA, leading to derepression of the SOS regulon and eventually DNA repair. The chain is LexA repressor from Xylella fastidiosa (strain M23).